We begin with the raw amino-acid sequence, 114 residues long: Large ribosomal subunit protein bL19 (114 aa).

The protein belongs to the bacterial ribosomal protein bL19 family.

Its function is as follows. This protein is located at the 30S-50S ribosomal subunit interface and may play a role in the structure and function of the aminoacyl-tRNA binding site. The chain is Large ribosomal subunit protein bL19 from Bacillus cytotoxicus (strain DSM 22905 / CIP 110041 / 391-98 / NVH 391-98).